A 141-amino-acid chain; its full sequence is NADH-quinone oxidoreductase subunit A (141 aa).

3 consecutive transmembrane segments (helical) span residues 24–44 (LLAL…LLLA), 77–97 (VPFY…AFIA), and 106–126 (LGWA…VALI).

It belongs to the complex I subunit 3 family. As to quaternary structure, NDH-1 is composed of 14 different subunits. Subunits NuoA, H, J, K, L, M, N constitute the membrane sector of the complex.

The protein resides in the cell inner membrane. The catalysed reaction is a quinone + NADH + 5 H(+)(in) = a quinol + NAD(+) + 4 H(+)(out). NDH-1 shuttles electrons from NADH, via FMN and iron-sulfur (Fe-S) centers, to quinones in the respiratory chain. The immediate electron acceptor for the enzyme in this species is believed to be ubiquinone. Couples the redox reaction to proton translocation (for every two electrons transferred, four hydrogen ions are translocated across the cytoplasmic membrane), and thus conserves the redox energy in a proton gradient. This is NADH-quinone oxidoreductase subunit A from Syntrophotalea carbinolica (strain DSM 2380 / NBRC 103641 / GraBd1) (Pelobacter carbinolicus).